The chain runs to 163 residues: MISTPEPLHAGHILTPFCCGVDSIDNWLKQRAMKNQTTGASRTFVCCGSDSNVLAYYSLASSAVTTNTSPGRFRRNMPDPIPVVVLGRLAVDKSLHGQGVARALVRDAGLRVIQVAETIGIRGMLVHALSDEAREFYQRVGFVPSPMDPMMLMVTLGDLVESV.

Tyr-137 is a catalytic residue.

Belongs to the acetyltransferase family. GNAT subfamily. Homodimer. Forms a complex with cognate antitoxin TacA2.

The catalysed reaction is glycyl-tRNA(Gly) + acetyl-CoA = N-acetylglycyl-tRNA(Gly) + CoA + H(+). It carries out the reaction L-isoleucyl-tRNA(Ile) + acetyl-CoA = N-acetyl-L-isoleucyl-tRNA(Ile) + CoA + H(+). It catalyses the reaction L-leucyl-tRNA(Leu) + acetyl-CoA = N-acetyl-L-leucyl-tRNA(Leu) + CoA + H(+). Functionally, toxic component of a type II toxin-antitoxin (TA) system. Acetylates tRNA and inhibits translation. Acetylates mainly Gly and Ile/Leu in vitro. Overexpression during the lag phase of a tacA2-tacT2 deletion strain leads to a 100-fold increase in persister cells in the presence of cefotaxime and a non-growth state in the absence of antibiotic. This protein, which has a single amino acid compared to S.typhimurium strain 14028s (Lys-29 is Glu in 14028s), produces 100-fold more persister cells, has much higher acetylation activity and binds tRNA much better. Persister cell formation and the growth defect are neutralized by cognate antitoxin TacA2. In terms of biological role, the TacA2-TacT2 complex both represses and derepresses expression of its own operon. This chain is tRNA-acetylating toxin 2, found in Salmonella enteritidis.